A 68-amino-acid polypeptide reads, in one-letter code: Intracellular calcium channel modulator CCP-Ts (68 aa).

Positions 1–23 (MNPKLLIVIGLLLATGVCSFAKA) are cleaved as a signal peptide. 3 disulfides stabilise this stretch: Cys33–Cys47, Cys40–Cys53, and Cys46–Cys62.

It belongs to the scorpion calcin-like family. In terms of tissue distribution, expressed by the venom gland. In intravenously injected mice, the labeled toxin has preference for heart, liver and lungs.

Its subcellular location is the secreted. The protein resides in the nucleus. Its function is as follows. Cell penetrating peptide (CPP) that increases intracellular calcium release through the activation of nuclear inositol 1,4,5-trisphosphate receptors (ITPR) of cardiomyocytes, thereby causing an increase in the contraction frequency of these cells. In vivo, this toxin is not lethal to mice, hovewer anti-CPP serum reduces venom lethality, suggesting that this toxin is lethal when it acts in synergy with other venom components. The chain is Intracellular calcium channel modulator CCP-Ts from Tityus serrulatus (Brazilian scorpion).